The primary structure comprises 143 residues: MGSVFLPHLHSGWHVDQAIVTEEERLVVIRFGSDSDRSCMLMDEILYSIAEKVVNFAAIYVCDTTEVPDFNEMYELQDPMTVMFFYKNKHMRCDFGTGNNNKMNFVVDNKQEMIDIIETVFRGARRNKGLVVSPYDYNYKRIQ.

Belongs to the DIM1 family. As to quaternary structure, component of the 25S [U4/U6.U5] tri-snRNP.

The protein resides in the nucleus. Essential role in pre-mRNA splicing. Also essential for entry into mitosis (G2/M progression) as well as for chromosome segregation during mitosis. This is Spliceosomal protein DIB1 (DIB1) from Eremothecium gossypii (strain ATCC 10895 / CBS 109.51 / FGSC 9923 / NRRL Y-1056) (Yeast).